Here is a 353-residue protein sequence, read N- to C-terminus: Alanine racemase (353 aa).

The active-site Proton acceptor; specific for D-alanine is the K34. The residue at position 34 (K34) is an N6-(pyridoxal phosphate)lysine. R128 serves as a coordination point for substrate. The Proton acceptor; specific for L-alanine role is filled by Y251. M299 contacts substrate.

The protein belongs to the alanine racemase family. The cofactor is pyridoxal 5'-phosphate.

It catalyses the reaction L-alanine = D-alanine. Its pathway is amino-acid biosynthesis; D-alanine biosynthesis; D-alanine from L-alanine: step 1/1. Its function is as follows. Catalyzes the interconversion of L-alanine and D-alanine. May also act on other amino acids. The chain is Alanine racemase (alr) from Alcanivorax borkumensis (strain ATCC 700651 / DSM 11573 / NCIMB 13689 / SK2).